The chain runs to 601 residues: Protein FAM13C (601 aa).

Disordered stretches follow at residues 82–134 (SMGN…PQSS) and 192–238 (DGQV…EDLQ). Positions 98–111 (ESGRNHGESQETEH) are enriched in basic and acidic residues. At S130 the chain carries Phosphoserine. Over residues 200-217 (DPAPASTQSAPADSADPA) the composition is skewed to low complexity. S258 is modified (phosphoserine). 3 disordered regions span residues 268–304 (QRFN…KEPQ), 327–352 (FEQE…WMND), and 366–485 (KLSE…DPVS). Residues 282-294 (SSQQFMMPRSSSR) show a composition bias toward low complexity. The segment covering 327–342 (FEQEKKYRPSHGDKTS) has biased composition (basic and acidic residues). 2 positions are modified to phosphoserine: S405 and S406. A compositionally biased stretch (basic and acidic residues) spans 415–446 (VPEKREQTPPQDDGKGTKQDKNLIKPLYDRCR). Residues 462-471 (QEEEDSDEDC) are compositionally biased toward acidic residues.

Belongs to the FAM13 family.

This chain is Protein FAM13C (Fam13c), found in Mus musculus (Mouse).